A 435-amino-acid chain; its full sequence is Probable exopolygalacturonase B (435 aa).

The first 15 residues, 1–15 (MKFFLATLFASAVSS), serve as a signal peptide directing secretion. N-linked (GlcNAc...) asparagine glycosylation is found at N59, N184, and N224. PbH1 repeat units lie at residues 208-239 (SKDVSFDDVYIHAFSTNKSALPKNSDGFDSLN), 240-261 (VDGLTVTNTRVDVGDDCFSPKP), 262-283 (NTTNIFVQNLLCNNTHGVSMGS), 294-315 (IEHAYIENVTLLNGQNGARLKA), and 326-347 (INNITYKNIRIENTDAPVVLDQ). Residue D254 is the Proton donor of the active site. C256 and C273 form a disulfide bridge. N-linked (GlcNAc...) asparagine glycosylation is found at N262 and N274. H277 is a catalytic residue. N301, N328, N365, and N373 each carry an N-linked (GlcNAc...) asparagine glycan. The PbH1 6 repeat unit spans residues 366-388 (VTNILFENISGTSSGKNGKVVAD). A disulfide bridge connects residues C391 and C397. N-linked (GlcNAc...) asparagine glycosylation occurs at N406.

Belongs to the glycosyl hydrolase 28 family.

The protein localises to the secreted. The enzyme catalyses [(1-&gt;4)-alpha-D-galacturonosyl](n) + H2O = alpha-D-galacturonate + [(1-&gt;4)-alpha-D-galacturonosyl](n-1). Functionally, specific in hydrolyzing the terminal glycosidic bond of polygalacturonic acid and oligogalacturonates. The protein is Probable exopolygalacturonase B (pgxB) of Aspergillus flavus (strain ATCC 200026 / FGSC A1120 / IAM 13836 / NRRL 3357 / JCM 12722 / SRRC 167).